We begin with the raw amino-acid sequence, 133 residues long: MGVMKEFKEFAVKGNVVDMAVGIVIGAAFGKIVTAFVDGVLMPPIGLMLGGVNFNELALILQEATGEAEAVMINYGIFVQTLVDFIIIAFAIFLVVRGINSLKRKEEAPKTPPGPSKEELLLGEIRDLLKQRS.

2 helical membrane passes run 10–30 and 76–96; these read FAVKGNVVDMAVGIVIGAAFG and GIFVQTLVDFIIIAFAIFLVV.

The protein belongs to the MscL family. As to quaternary structure, homopentamer.

It localises to the cell inner membrane. Functionally, channel that opens in response to stretch forces in the membrane lipid bilayer. May participate in the regulation of osmotic pressure changes within the cell. The protein is Large-conductance mechanosensitive channel of Chlorobium phaeobacteroides (strain BS1).